A 104-amino-acid polypeptide reads, in one-letter code: Small ribosomal subunit protein uS10 (104 aa).

It belongs to the universal ribosomal protein uS10 family. As to quaternary structure, part of the 30S ribosomal subunit.

Functionally, involved in the binding of tRNA to the ribosomes. The chain is Small ribosomal subunit protein uS10 from Thermoplasma acidophilum (strain ATCC 25905 / DSM 1728 / JCM 9062 / NBRC 15155 / AMRC-C165).